Consider the following 283-residue polypeptide: Aquaporin PIP2-5 (283 aa).

The next 2 membrane-spanning stretches (helical) occupy residues 37-57 (AVIA…ATVI) and 74-94 (CGGV…FILV). Positions 106 to 108 (NPA) match the NPA 1 motif. Helical transmembrane passes span 125 to 145 (ILYI…VKGF), 167 to 187 (GTGL…VFSA), and 199 to 219 (VPVL…LATI). The short motif at 227–229 (NPA) is the NPA 2 element. Residues 249-269 (IFWVGPFIGAAIAALYHQIVL) traverse the membrane as a helical segment.

The protein belongs to the MIP/aquaporin (TC 1.A.8) family. PIP (TC 1.A.8.11) subfamily. Expressed in roots.

It is found in the cell membrane. Its function is as follows. Water channel required to facilitate the transport of water across cell membrane. May play a role in root water uptake. The polypeptide is Aquaporin PIP2-5 (PIP2-5) (Oryza sativa subsp. japonica (Rice)).